Here is a 584-residue protein sequence, read N- to C-terminus: Lamin-B1 (584 aa).

The interval 1-22 (MAAAVAPLSPQPRGAAASAALS) is disordered. The segment at 2 to 33 (AAAVAPLSPQPRGAAASAALSPTRISRLQEKE) is head. The residue at position 22 (Ser22) is a Phosphoserine. An IF rod domain is found at 31–387 (EKEELRQLND…KLLESEEERL (357 aa)). The tract at residues 34 to 70 (ELRQLNDRLAVYIDKVRSLETENSALQRRVSEREQVC) is coil 1A. The coil 1B stretch occupies residues 81-218 (FETELADARK…NVYEEEIKET (138 aa)). The segment at 243–385 (QALKEIREQH…YRKLLESEEE (143 aa)) is coil 2. The interval 386–584 (RLRLSPGPSS…RKPERSCVVM (199 aa)) is tail. Disordered regions lie at residues 388–431 (RLSP…SVSI) and 548–584 (TVNE…CVVM). Over residues 394-408 (SSRVTVSRASSSRSV) the composition is skewed to low complexity. The short motif at 414–419 (KRKRID) is the Nuclear localization signal element. The LTD domain maps to 429–545 (VSISHSASAT…EEVAQRSTVF (117 aa)). Positions 551 to 565 (EGEEEEEEGEEEILE) are enriched in acidic residues. A compositionally biased stretch (basic and acidic residues) spans 575-584 (RKPERSCVVM). The residue at position 581 (Cys581) is a Cysteine methyl ester. Cys581 is lipidated: S-farnesyl cysteine. A propeptide spans 582–584 (VVM) (removed in mature form).

The protein belongs to the intermediate filament family. Homodimer. Lamin dimers then assemble into dimeric head-to-tail polymers. Ultimately, two head-to-tail polymers assemble laterally into a protofilament with a uniformly shaped rod of 3.5 nm in diameter. Phosphorylation plays a key role in lamin organization, subcellular localization and nuclear envelope disintegration. Phosphorylation by CDK1 at Ser-22 at the onset of mitosis drives lamin disassembly and nuclear envelope breakdown.

Its subcellular location is the nucleus lamina. It localises to the nucleus envelope. It is found in the nucleus. The protein resides in the nucleoplasm. The protein localises to the nucleus matrix. Lamins are intermediate filament proteins that assemble into a filamentous meshwork, and which constitute the major components of the nuclear lamina, a fibrous layer on the nucleoplasmic side of the inner nuclear membrane. Lamins provide a framework for the nuclear envelope, bridging the nuclear envelope and chromatin. Plays an important role in nuclear assembly, chromatin organization, nuclear membrane and telomere dynamics. The chain is Lamin-B1 (LMNB1) from Gallus gallus (Chicken).